We begin with the raw amino-acid sequence, 873 residues long: Sine oculis-binding protein homolog (873 aa).

The span at 1–14 (MAEMEKEGRPPENK) shows a compositional bias: basic and acidic residues. A disordered region spans residues 1–26 (MAEMEKEGRPPENKRSRKPAHPVKRE). FCS-type zinc fingers lie at residues 142–180 (DDVS…KCFA) and 216–256 (FKNN…KCLN). 5 disordered regions span residues 307–338 (ARRK…SDTA), 413–485 (RGPP…GAPL), 550–608 (KPPS…NQAQ), 742–766 (STEG…ELAV), and 779–811 (SNCH…NPAD). Positions 312–338 (PSPASAAGQIQGPGPSASTTASPSDTA) are enriched in low complexity. The segment covering 460 to 485 (IHPPTTPTMPGNPPGLLPPPPPGAPL) has biased composition (pro residues). The span at 554–570 (GFSSNGENFIPSNSSET) shows a compositional bias: polar residues. A compositionally biased stretch (low complexity) spans 571–603 (PGGKPPNSSSSPRESKQGSSKPSDSSPSCSGQS). Positions 783-793 (LEGDTGKKAGE) are enriched in basic and acidic residues.

This sequence belongs to the SOBP family.

Implicated in development of the cochlea. The polypeptide is Sine oculis-binding protein homolog (Gallus gallus (Chicken)).